The chain runs to 171 residues: Adenine phosphoribosyltransferase (171 aa).

It belongs to the purine/pyrimidine phosphoribosyltransferase family. Homodimer.

Its subcellular location is the cytoplasm. It catalyses the reaction AMP + diphosphate = 5-phospho-alpha-D-ribose 1-diphosphate + adenine. The protein operates within purine metabolism; AMP biosynthesis via salvage pathway; AMP from adenine: step 1/1. Its function is as follows. Catalyzes a salvage reaction resulting in the formation of AMP, that is energically less costly than de novo synthesis. The protein is Adenine phosphoribosyltransferase of Halalkalibacterium halodurans (strain ATCC BAA-125 / DSM 18197 / FERM 7344 / JCM 9153 / C-125) (Bacillus halodurans).